Reading from the N-terminus, the 382-residue chain is Albumin (382 aa).

2 consecutive Albumin domains span residues 1–178 (KCRI…ILLE) and 179–377 (AALK…GLLQ). 12 disulfide bridges follow: cysteine 2–cysteine 48, cysteine 47–cysteine 55, cysteine 67–cysteine 81, cysteine 80–cysteine 91, cysteine 116–cysteine 161, cysteine 160–cysteine 169, cysteine 192–cysteine 238, cysteine 237–cysteine 248, cysteine 261–cysteine 277, cysteine 276–cysteine 287, cysteine 314–cysteine 359, and cysteine 358–cysteine 367. Positions 51 and 54 each coordinate Ca(2+). Aspartate 51 lines the Zn(2+) pocket.

It belongs to the ALB/AFP/VDB family. Plasma.

The protein resides in the secreted. Its function is as follows. Serum albumin, the main protein of plasma, has a good binding capacity for water, Ca(2+), Na(+), K(+), fatty acids, hormones, bilirubin and drugs. Its main function is the regulation of the colloidal osmotic pressure of blood. The sequence is that of Albumin (ALB) from Aquarana catesbeiana (American bullfrog).